Reading from the N-terminus, the 207-residue chain is Frataxin, mitochondrial (207 aa).

Residues 1-40 (MWAFGGRAAVGLLPRTASRASAWVGNPRWREPIVTCGRRG) constitute a mitochondrion transit peptide.

The protein belongs to the frataxin family. As to quaternary structure, component of the mitochondrial core iron-sulfur cluster (ISC) complex composed of NFS1, LYRM4, NDUFAB1, ISCU, FXN, and FDX2; this complex is a heterohexamer containing two copies of each monomer. Homodimer. Monomer (probable predominant form). Oligomer. Monomers and polymeric aggregates of &gt;1 MDa have been isolated from mitochondria. A small fraction of heterologous overexpressed recombinant frataxin forms high-molecular weight aggregates that incorporate iron. Interacts with LYRM4. Interacts (via ferrous form) with ISCU; the interaction is possible when both are bound to the dimeric form of the cysteine desulfurase complex (NFS1:LYRM4) and the interaction enhances FXN interaction to the dimeric form of the cysteine desulfurase complex (NFS1:LYRM4). Interacts with FECH; one iron-bound FXN monomer seems to interact with a FECH homodimer. Interacts with SDHA and SDHB. Interacts with ACO2; the interaction is dependent on citrate. Interacts with HSPA9. Component of a complex composed of FXN, NFS1, LYRM4 and ISCU. In terms of assembly, interacts with ACO1. Interacts with ISCU (cytoplasmic form). In terms of processing, processed in two steps by mitochondrial processing peptidase (MPP). MPP first cleaves the precursor to intermediate form and subsequently converts the intermediate to yield frataxin mature form (frataxin(81-210)) which is the predominant form. The additional forms, frataxin(56-210) and frataxin(78-210), seem to be produced when the normal maturation process is impaired; their physiological relevance is unsure. Heart, liver, skeletal muscle, kidney, spleen and thymus. Weakly expressed in the brain and lung.

Its subcellular location is the mitochondrion. It localises to the cytoplasm. It is found in the cytosol. It catalyses the reaction 4 Fe(2+) + O2 + 4 H(+) = 4 Fe(3+) + 2 H2O. In terms of biological role, functions as an activator of persulfide transfer to the scaffoding protein ISCU as component of the core iron-sulfur cluster (ISC) assembly complex and participates to the [2Fe-2S] cluster assembly. Accelerates sulfur transfer from NFS1 persulfide intermediate to ISCU and to small thiols such as L-cysteine and glutathione leading to persulfuration of these thiols and ultimately sulfide release. Binds ferrous ion and is released from FXN upon the addition of both L-cysteine and reduced FDX2 during [2Fe-2S] cluster assembly. The core iron-sulfur cluster (ISC) assembly complex is involved in the de novo synthesis of a [2Fe-2S] cluster, the first step of the mitochondrial iron-sulfur protein biogenesis. This process is initiated by the cysteine desulfurase complex (NFS1:LYRM4:NDUFAB1) that produces persulfide which is delivered on the scaffold protein ISCU in a FXN-dependent manner. Then this complex is stabilized by FDX2 which provides reducing equivalents to accomplish the [2Fe-2S] cluster assembly. Finally, the [2Fe-2S] cluster is transferred from ISCU to chaperone proteins, including HSCB, HSPA9 and GLRX5. May play a role in the protection against iron-catalyzed oxidative stress through its ability to catalyze the oxidation of Fe(2+) to Fe(3+); the oligomeric form but not the monomeric form has in vitro ferroxidase activity. May be able to store large amounts of iron in the form of a ferrihydrite mineral by oligomerization; however, the physiological relevance is unsure as reports are conflicting and the function has only been shown using heterologous overexpression systems. May function as an iron chaperone protein that protects the aconitase [4Fe-4S]2+ cluster from disassembly and promotes enzyme reactivation. May play a role as a high affinity iron binding partner for FECH that is capable of both delivering iron to ferrochelatase and mediating the terminal step in mitochondrial heme biosynthesis. Its function is as follows. Modulates the RNA-binding activity of ACO1. May be involved in the cytoplasmic iron-sulfur protein biogenesis. May contribute to oxidative stress resistance and overall cell survival. In Mus musculus (Mouse), this protein is Frataxin, mitochondrial.